A 388-amino-acid chain; its full sequence is Succinyl-diaminopimelate desuccinylase (388 aa).

Histidine 74 contributes to the Zn(2+) binding site. Aspartate 76 is an active-site residue. Position 107 (aspartate 107) interacts with Zn(2+). The active-site Proton acceptor is the glutamate 142. Residues glutamate 143, glutamate 171, and histidine 360 each contribute to the Zn(2+) site.

It belongs to the peptidase M20A family. DapE subfamily. In terms of assembly, homodimer. Zn(2+) serves as cofactor. It depends on Co(2+) as a cofactor.

The enzyme catalyses N-succinyl-(2S,6S)-2,6-diaminopimelate + H2O = (2S,6S)-2,6-diaminopimelate + succinate. Its pathway is amino-acid biosynthesis; L-lysine biosynthesis via DAP pathway; LL-2,6-diaminopimelate from (S)-tetrahydrodipicolinate (succinylase route): step 3/3. Catalyzes the hydrolysis of N-succinyl-L,L-diaminopimelic acid (SDAP), forming succinate and LL-2,6-diaminopimelate (DAP), an intermediate involved in the bacterial biosynthesis of lysine and meso-diaminopimelic acid, an essential component of bacterial cell walls. The sequence is that of Succinyl-diaminopimelate desuccinylase from Rhodopseudomonas palustris (strain BisB5).